A 429-amino-acid polypeptide reads, in one-letter code: Phosphomethylpyrimidine synthase (429 aa).

Substrate is bound by residues Asn-66, Met-95, Tyr-124, His-163, 185–187 (SRG), 226–229 (DGLR), and Glu-265. Position 269 (His-269) interacts with Zn(2+). Residue Tyr-292 participates in substrate binding. His-333 serves as a coordination point for Zn(2+). Positions 407, 410, and 414 each coordinate [4Fe-4S] cluster.

It belongs to the ThiC family. It depends on [4Fe-4S] cluster as a cofactor.

It carries out the reaction 5-amino-1-(5-phospho-beta-D-ribosyl)imidazole + S-adenosyl-L-methionine = 4-amino-2-methyl-5-(phosphooxymethyl)pyrimidine + CO + 5'-deoxyadenosine + formate + L-methionine + 3 H(+). Its pathway is cofactor biosynthesis; thiamine diphosphate biosynthesis. Its function is as follows. Catalyzes the synthesis of the hydroxymethylpyrimidine phosphate (HMP-P) moiety of thiamine from aminoimidazole ribotide (AIR) in a radical S-adenosyl-L-methionine (SAM)-dependent reaction. This Pyrococcus furiosus (strain ATCC 43587 / DSM 3638 / JCM 8422 / Vc1) protein is Phosphomethylpyrimidine synthase.